Here is a 417-residue protein sequence, read N- to C-terminus: S-adenosylmethionine synthase (417 aa).

Residue His16 coordinates ATP. Residue Asp18 coordinates Mg(2+). Glu44 provides a ligand contact to K(+). L-methionine contacts are provided by Glu57 and Gln100. Positions 100-110 (QSPDIAQGVTS) are flexible loop. ATP contacts are provided by residues 175–177 (DGK), 251–252 (KF), Asp260, 266–267 (RK), Ala283, and Lys287. L-methionine is bound at residue Asp260. Lys291 serves as a coordination point for L-methionine.

This sequence belongs to the AdoMet synthase family. As to quaternary structure, homotetramer; dimer of dimers. The cofactor is Mg(2+). K(+) serves as cofactor.

It is found in the cytoplasm. The catalysed reaction is L-methionine + ATP + H2O = S-adenosyl-L-methionine + phosphate + diphosphate. Its pathway is amino-acid biosynthesis; S-adenosyl-L-methionine biosynthesis; S-adenosyl-L-methionine from L-methionine: step 1/1. Catalyzes the formation of S-adenosylmethionine (AdoMet) from methionine and ATP. The overall synthetic reaction is composed of two sequential steps, AdoMet formation and the subsequent tripolyphosphate hydrolysis which occurs prior to release of AdoMet from the enzyme. In Picosynechococcus sp. (strain ATCC 27264 / PCC 7002 / PR-6) (Agmenellum quadruplicatum), this protein is S-adenosylmethionine synthase.